A 403-amino-acid chain; its full sequence is TBC1 domain family member 20 (403 aa).

Residues M1–F25 are disordered. The Rab-GAP TBC domain maps to L60–H246. 2 consecutive transmembrane segments (helical) span residues L238–V258 and F367–V387.

(Microbial infection) Directly interacts with the N-terminal amphipathic helix of hepatitis C virus (HCV) NS5A.

The protein localises to the membrane. GTPase-activating protein (GAP) specific for Rab1 and Rab2 small GTPase families for which it can accelerate the intrinsic GTP hydrolysis rate by more than five orders of magnitude. Also shows GAP activity for RAB18 GTPase. Promotes RAB18 dissociation from the endoplasmic reticulum (ER) membrane into the cytosol, probably through stimulating RAB18 GTP-hydrolysis. Involved in maintaining endoplasmic reticulum structure. The chain is TBC1 domain family member 20 from Homo sapiens (Human).